The primary structure comprises 569 residues: Membrane protein insertase YidC (569 aa).

The next 8 helical transmembrane spans lie at 7–24 (VLWV…DNYN), 219–239 (GSAL…PAIY), 299–319 (LYAV…TASM), 340–360 (FELV…FWLM), 366–386 (ILGN…LAFF), 436–456 (IGGC…YWVL), 485–505 (IGTF…SMFI), and 526–546 (PIAF…YWVV).

It belongs to the OXA1/ALB3/YidC family. Type 1 subfamily. As to quaternary structure, interacts with the Sec translocase complex via SecD. Specifically interacts with transmembrane segments of nascent integral membrane proteins during membrane integration.

It is found in the cell inner membrane. In terms of biological role, required for the insertion and/or proper folding and/or complex formation of integral membrane proteins into the membrane. Involved in integration of membrane proteins that insert both dependently and independently of the Sec translocase complex, as well as at least some lipoproteins. Aids folding of multispanning membrane proteins. This is Membrane protein insertase YidC from Herminiimonas arsenicoxydans.